The following is a 424-amino-acid chain: Kynurenine--oxoglutarate transaminase 1 (424 aa).

Gly-36 contributes to the substrate binding site. Lys-82 carries the N6-succinyllysine modification. Residue Asn-185 coordinates substrate. An N6-(pyridoxal phosphate)lysine modification is found at Lys-247. Residue Arg-398 participates in substrate binding. N6-succinyllysine is present on Lys-413.

It belongs to the class-I pyridoxal-phosphate-dependent aminotransferase family. Homodimer. The cofactor is pyridoxal 5'-phosphate.

Its subcellular location is the cytoplasm. It is found in the cytosol. The enzyme catalyses L-kynurenine + 2-oxoglutarate = kynurenate + L-glutamate + H2O. It catalyses the reaction 3-phenylpyruvate + L-glutamine = 2-oxoglutaramate + L-phenylalanine. It carries out the reaction an S-substituted L-cysteine + H2O = a thiol + pyruvate + NH4(+). It functions in the pathway amino-acid degradation; L-kynurenine degradation; kynurenate from L-kynurenine: step 1/2. Catalyzes the irreversible transamination of the L-tryptophan metabolite L-kynurenine to form kynurenic acid (KA), an intermediate in the tryptophan catabolic pathway which is also a broad spectrum antagonist of the three ionotropic excitatory amino acid receptors among others. Metabolizes the cysteine conjugates of certain halogenated alkenes and alkanes to form reactive metabolites. Catalyzes the beta-elimination of S-conjugates and Se-conjugates of L-(seleno)cysteine, resulting in the cleavage of the C-S or C-Se bond. In Mus musculus (Mouse), this protein is Kynurenine--oxoglutarate transaminase 1 (Kyat1).